The sequence spans 143 residues: Nucleoside diphosphate kinase (143 aa).

ATP-binding residues include lysine 11, phenylalanine 59, arginine 87, threonine 93, arginine 104, and asparagine 114. The active-site Pros-phosphohistidine intermediate is histidine 117.

This sequence belongs to the NDK family. In terms of assembly, homotetramer. Mg(2+) is required as a cofactor.

The protein localises to the cytoplasm. It carries out the reaction a 2'-deoxyribonucleoside 5'-diphosphate + ATP = a 2'-deoxyribonucleoside 5'-triphosphate + ADP. The enzyme catalyses a ribonucleoside 5'-diphosphate + ATP = a ribonucleoside 5'-triphosphate + ADP. Functionally, major role in the synthesis of nucleoside triphosphates other than ATP. The ATP gamma phosphate is transferred to the NDP beta phosphate via a ping-pong mechanism, using a phosphorylated active-site intermediate. The protein is Nucleoside diphosphate kinase of Sodalis glossinidius (strain morsitans).